We begin with the raw amino-acid sequence, 2403 residues long: Highly reducing polyketide synthase fogA (2403 aa).

A Ketosynthase family 3 (KS3) domain is found at 3-428 (DDPPCIVGMA…GANAHVILES (426 aa)). Active-site for beta-ketoacyl synthase activity residues include cysteine 176, histidine 311, and histidine 350. The interval 538–858 (VFTGQGAQYA…PYAPSLVRKE (321 aa)) is malonyl-CoA:ACP transacylase (MAT) domain. Residue serine 632 is the For malonyltransferase activity of the active site. An N-terminal hotdog fold region spans residues 929–1068 (HELLGTFALT…GSIRVVEPLT (140 aa)). Positions 929–1238 (HELLGTFALT…DARMSLYTGK (310 aa)) are dehydratase (DH) domain. The PKS/mFAS DH domain occupies 929–1241 (HELLGTFALT…MSLYTGKSSA (313 aa)). Histidine 961 (proton acceptor; for dehydratase activity) is an active-site residue. The tract at residues 1084–1241 (SFEASPTNRW…MSLYTGKSSA (158 aa)) is C-terminal hotdog fold. Aspartate 1152 serves as the catalytic Proton donor; for dehydratase activity. The interval 1663–1981 (GATDSMFFQQ…QQDRIGKIVI (319 aa)) is enoyl reductase (ER) domain. The tract at residues 2006–2185 (VYLLIGCLGG…AVAVGLGMIS (180 aa)) is ketoreductase (KR) domain. The disordered stretch occupies residues 2280–2300 (AQNSTSSSGSNSNTPTTAAPW). A compositionally biased stretch (low complexity) spans 2282–2296 (NSTSSSGSNSNTPTT). Residues 2320 to 2398 (SLNAAILRLI…GLAVVVEGKL (79 aa)) enclose the Carrier domain. Residue serine 2357 is modified to O-(pantetheine 4'-phosphoryl)serine.

It depends on pantetheine 4'-phosphate as a cofactor.

The protein operates within secondary metabolite biosynthesis. Functionally, highly reducing polyketide synthase; part of the gene cluster that mediates the biosynthesis of flavoglaucin and congeners (including aspergin, dihydroauroglaucin and auroglaucin), prenylated salicylaldehyde derivatives carrying a saturated or an unsaturated C-7 side chain. FogA releases the carboxylic acid (8E,10E,12E)-3,5,7-trihydroxytetradeca-8,10,12-trienoic acid as its product, as well as derivatives with one and two double bonds. FogA is indeed able to reduce the initial triketide, thus being at least partially responsible for the differently saturated heptyl side chains of flavoglaucin congeners. The oxidoreductases fogB, fogC and fogD modify the nascent polyketide in fogA-bound form and, together, fogA, fogB, fogC and fogD are necessary for the formation of the aromatic core and the cyclized PKS products are released as salicyl alcohols. In particular, fogB is responsible for oxidation of a hydroxyl group or reduction of remaining double bond(s) at the C-7 residue whereas fogD is probably involved in the reductive release of the modified PKS products. The cytochrome P450 monooxygenase fogE is then responsible for the hydroxylation at C-3 of the benzene ring. The fogE products are substrates of the prenyltransferase fogH and the prenylated benzyl alcohols are subsequently oxidized by the fogF to produce the final aryl aldehydes flavoglaucin and congeners. The short-chain dehydrogenase fogG does not seem to be involved in the biosynthesis of the prenylated salicylaldehyde derivatives. In Aspergillus ruber (strain CBS 135680), this protein is Highly reducing polyketide synthase fogA.